Reading from the N-terminus, the 128-residue chain is uncharacterized protein (128 aa).

The VOC domain occupies 1–126; that stretch reads MHHIELYVSD…DRIKVELVAP (126 aa).

This is an uncharacterized protein from Bacillus subtilis (strain 168).